Consider the following 496-residue polypeptide: Ribose import ATP-binding protein RbsA (496 aa).

ABC transporter domains follow at residues 5–242 and 252–496; these read IEMK…VGRS and SQIG…TGGE. 37–44 is an ATP binding site; that stretch reads GENGAGKS.

This sequence belongs to the ABC transporter superfamily. Ribose importer (TC 3.A.1.2.1) family. As to quaternary structure, the complex is composed of an ATP-binding protein (RbsA), two transmembrane proteins (RbsC) and a solute-binding protein (RbsB).

The protein resides in the cell membrane. It carries out the reaction D-ribose(out) + ATP + H2O = D-ribose(in) + ADP + phosphate + H(+). Its function is as follows. Part of the ABC transporter complex RbsABC involved in ribose import. Responsible for energy coupling to the transport system. The polypeptide is Ribose import ATP-binding protein RbsA (Bacillus cereus (strain ATCC 14579 / DSM 31 / CCUG 7414 / JCM 2152 / NBRC 15305 / NCIMB 9373 / NCTC 2599 / NRRL B-3711)).